Here is a 546-residue protein sequence, read N- to C-terminus: CCA tRNA nucleotidyltransferase, mitochondrial (546 aa).

The protein belongs to the tRNA nucleotidyltransferase/poly(A) polymerase family.

The protein localises to the mitochondrion. The protein resides in the cytoplasm. It is found in the nucleus. The catalysed reaction is a tRNA precursor + 2 CTP + ATP = a tRNA with a 3' CCA end + 3 diphosphate. Functionally, nucleotidyltransferase that catalyzes the addition and repair of the essential 3'-terminal CCA sequence in tRNAs, which is necessary for the attachment of amino acids to the 3' terminus of tRNA molecules, using CTP and ATP as substrates. tRNA 3'-terminal CCA addition is required both for tRNA processing and repair. Also involved in tRNA surveillance by mediating tandem CCA addition to generate a CCACCA at the 3' terminus of unstable tRNAs. While stable tRNAs receive only 3'-terminal CCA, unstable tRNAs are marked with CCACCA and rapidly degraded. The structural flexibility of RNA controls the choice between CCA versus CCACCA addition: following the first CCA addition cycle, nucleotide-binding to the active site triggers a clockwise screw motion, producing torque on the RNA. This ejects stable RNAs, whereas unstable RNAs are refolded while bound to the enzyme and subjected to a second CCA catalytic cycle. In Saccharomyces cerevisiae (strain ATCC 204508 / S288c) (Baker's yeast), this protein is CCA tRNA nucleotidyltransferase, mitochondrial (CCA1).